Here is a 213-residue protein sequence, read N- to C-terminus: MKFQLQHKTIFLRQLGIQPYEPISDAMHLFTEQRDTNTPDEIWLVQHPKVFTQGQAGKAEHLLSLGDIPVIQSDRGGQVTYHGPGQQVMYVMIDIKRARIGVRQLVTAIEDTVIKTLAHFGVKAYARPDAPGVYVNEAKICSLGLRIRKGCSFHGLALNIAMDLEPFQRINPCGYAGMKMIQLSDLVPGITVEQVQPVLVEKFCQQLGFKLNS.

In terms of domain architecture, BPL/LPL catalytic spans 36 to 211 (TNTPDEIWLV…KFCQQLGFKL (176 aa)). Residues 75–82 (RGGQVTYH), 142–144 (SLG), and 155–157 (GLA) contribute to the substrate site. Cys173 functions as the Acyl-thioester intermediate in the catalytic mechanism.

The protein belongs to the LipB family.

The protein localises to the cytoplasm. It catalyses the reaction octanoyl-[ACP] + L-lysyl-[protein] = N(6)-octanoyl-L-lysyl-[protein] + holo-[ACP] + H(+). The protein operates within protein modification; protein lipoylation via endogenous pathway; protein N(6)-(lipoyl)lysine from octanoyl-[acyl-carrier-protein]: step 1/2. Functionally, catalyzes the transfer of endogenously produced octanoic acid from octanoyl-acyl-carrier-protein onto the lipoyl domains of lipoate-dependent enzymes. Lipoyl-ACP can also act as a substrate although octanoyl-ACP is likely to be the physiological substrate. This Photorhabdus laumondii subsp. laumondii (strain DSM 15139 / CIP 105565 / TT01) (Photorhabdus luminescens subsp. laumondii) protein is Octanoyltransferase.